Here is a 207-residue protein sequence, read N- to C-terminus: uncharacterized protein (207 aa).

Active-site residues include arginine 80, glutamate 88, and arginine 148.

Belongs to the thermonuclease family.

This is an uncharacterized protein from Methanocaldococcus jannaschii (strain ATCC 43067 / DSM 2661 / JAL-1 / JCM 10045 / NBRC 100440) (Methanococcus jannaschii).